A 300-amino-acid polypeptide reads, in one-letter code: D-alanine--D-alanine ligase (300 aa).

One can recognise an ATP-grasp domain in the interval 99–293 (KKILKYANIN…FAELLNSIVK (195 aa)). 126–181 (IEKIGYPVFVKPNSGGSSVATNLVKDGDGIKEAVELALKYDKEVMIENYTKGEEIT) contacts ATP. Residues D248, E260, and N262 each contribute to the Mg(2+) site.

This sequence belongs to the D-alanine--D-alanine ligase family. Mg(2+) serves as cofactor. Mn(2+) is required as a cofactor.

It is found in the cytoplasm. The enzyme catalyses 2 D-alanine + ATP = D-alanyl-D-alanine + ADP + phosphate + H(+). The protein operates within cell wall biogenesis; peptidoglycan biosynthesis. Cell wall formation. The polypeptide is D-alanine--D-alanine ligase (Clostridium botulinum (strain 657 / Type Ba4)).